The chain runs to 765 residues: Phosphoribosylformylglycinamidine synthase subunit PurL (765 aa).

H59 is an active-site residue. ATP-binding residues include Y62 and K104. Position 106 (E106) interacts with Mg(2+). Substrate contacts are provided by residues 107-110 (SHNH) and R129. H108 acts as the Proton acceptor in catalysis. D130 provides a ligand contact to Mg(2+). Q254 contacts substrate. D282 is a Mg(2+) binding site. 326–328 (ESQ) provides a ligand contact to substrate. ATP contacts are provided by N522 and G559. Residue N560 participates in Mg(2+) binding. S562 contributes to the substrate binding site.

The protein belongs to the FGAMS family. In terms of assembly, monomer. Part of the FGAM synthase complex composed of 1 PurL, 1 PurQ and 2 PurS subunits.

It localises to the cytoplasm. It catalyses the reaction N(2)-formyl-N(1)-(5-phospho-beta-D-ribosyl)glycinamide + L-glutamine + ATP + H2O = 2-formamido-N(1)-(5-O-phospho-beta-D-ribosyl)acetamidine + L-glutamate + ADP + phosphate + H(+). Its pathway is purine metabolism; IMP biosynthesis via de novo pathway; 5-amino-1-(5-phospho-D-ribosyl)imidazole from N(2)-formyl-N(1)-(5-phospho-D-ribosyl)glycinamide: step 1/2. Its function is as follows. Part of the phosphoribosylformylglycinamidine synthase complex involved in the purines biosynthetic pathway. Catalyzes the ATP-dependent conversion of formylglycinamide ribonucleotide (FGAR) and glutamine to yield formylglycinamidine ribonucleotide (FGAM) and glutamate. The FGAM synthase complex is composed of three subunits. PurQ produces an ammonia molecule by converting glutamine to glutamate. PurL transfers the ammonia molecule to FGAR to form FGAM in an ATP-dependent manner. PurS interacts with PurQ and PurL and is thought to assist in the transfer of the ammonia molecule from PurQ to PurL. This Thermobifida fusca (strain YX) protein is Phosphoribosylformylglycinamidine synthase subunit PurL.